Consider the following 386-residue polypeptide: Caspase-1-A (386 aa).

A propeptide spanning residues 1-100 (MTAQLNKVRR…PPMAPVPIQE (100 aa)) is cleaved from the precursor. Residues 22–88 (SDLLDDLREK…HKTLAKSLGL (67 aa)) form the CARD domain. Catalysis depends on residues histidine 218 and cysteine 274. Residues 287 to 296 (DVASPPLEDD) constitute a propeptide that is removed on maturation.

Belongs to the peptidase C14A family. As to quaternary structure, heterotetramer that consists of two anti-parallel arranged heterodimers, each one formed by a 20 kDa (Caspase-1 subunit p20) and a 10 kDa (Caspase-1 subunit p10) subunit. In terms of assembly, heterotetramer that consists of two anti-parallel arranged heterodimers, each one formed by a 20 kDa (Caspase-1 subunit p20) and a 10 kDa (Caspase-1 subunit p10) subunit. Can form a heterodimer with isoform epsilon which then has an inhibitory effect. Post-translationally, the two subunits are derived from the precursor sequence by an autocatalytic mechanism.

It is found in the cytoplasm. The protein localises to the cell membrane. It catalyses the reaction Strict requirement for an Asp residue at position P1 and has a preferred cleavage sequence of Tyr-Val-Ala-Asp-|-.. Thiol protease involved in a variety of inflammatory processes by proteolytically cleaving other proteins, such as the precursors of the inflammatory cytokines interleukin-1 beta (IL1B) and interleukin 18 (IL18) as well as the pyroptosis inducer Gasdermin-D (GSDMD), into active mature peptides. Plays a key role in cell immunity as an inflammatory response initiator: once activated through formation of an inflammasome complex, it initiates a pro-inflammatory response through the cleavage of the two inflammatory cytokines IL1B and IL18, releasing the mature cytokines which are involved in a variety of inflammatory processes. Cleaves a tetrapeptide after an Asp residue at position P1. Also initiates pyroptosis, a programmed lytic cell death pathway, through cleavage of GSDMD. The protein is Caspase-1-A (casp1-a) of Xenopus laevis (African clawed frog).